We begin with the raw amino-acid sequence, 456 residues long: Signal transduction histidine-protein kinase ArlS (456 aa).

2 helical membrane passes run leucine 13–phenylalanine 33 and isoleucine 157–phenylalanine 177. The 54-residue stretch at serine 179–asparagine 232 folds into the HAMP domain. A Histidine kinase domain is found at aspartate 240–asparagine 456. Residue histidine 243 is modified to Phosphohistidine; by autocatalysis.

Autophosphorylated.

The protein localises to the cell membrane. The enzyme catalyses ATP + protein L-histidine = ADP + protein N-phospho-L-histidine.. Its function is as follows. Member of the two-component regulatory system ArlS/ArlR. ArlS probably functions as a sensor protein kinase which is autophosphorylated at a histidine residue and transfers its phosphate group to ArlR. The polypeptide is Signal transduction histidine-protein kinase ArlS (arlS) (Staphylococcus epidermidis (strain ATCC 35984 / DSM 28319 / BCRC 17069 / CCUG 31568 / BM 3577 / RP62A)).